We begin with the raw amino-acid sequence, 478 residues long: Aspartyl/glutamyl-tRNA(Asn/Gln) amidotransferase subunit B 2 (478 aa).

Belongs to the GatB/GatE family. GatB subfamily. Heterotrimer of A, B and C subunits.

The catalysed reaction is L-glutamyl-tRNA(Gln) + L-glutamine + ATP + H2O = L-glutaminyl-tRNA(Gln) + L-glutamate + ADP + phosphate + H(+). It catalyses the reaction L-aspartyl-tRNA(Asn) + L-glutamine + ATP + H2O = L-asparaginyl-tRNA(Asn) + L-glutamate + ADP + phosphate + 2 H(+). Allows the formation of correctly charged Asn-tRNA(Asn) or Gln-tRNA(Gln) through the transamidation of misacylated Asp-tRNA(Asn) or Glu-tRNA(Gln) in organisms which lack either or both of asparaginyl-tRNA or glutaminyl-tRNA synthetases. The reaction takes place in the presence of glutamine and ATP through an activated phospho-Asp-tRNA(Asn) or phospho-Glu-tRNA(Gln). In Clostridium acetobutylicum (strain ATCC 824 / DSM 792 / JCM 1419 / IAM 19013 / LMG 5710 / NBRC 13948 / NRRL B-527 / VKM B-1787 / 2291 / W), this protein is Aspartyl/glutamyl-tRNA(Asn/Gln) amidotransferase subunit B 2 (gatB2).